The sequence spans 691 residues: Homeobox protein NOBOX (691 aa).

Residues 94-103 (ELTRGQKAGE) show a composition bias toward basic and acidic residues. The tract at residues 94–233 (ELTRGQKAGE…NSARATHNPV (140 aa)) is disordered. Residues 216–228 (PTSSPGAPNSARA) show a composition bias toward polar residues. Positions 272-363 (RKKTRTLYRS…NRRAKWRKME (92 aa)) form a DNA-binding region, homeobox. 3 disordered regions span residues 366-385 (NGKESKDNPAAPGPASSQCS), 394-437 (VPME…AQRV), and 635-691 (QALG…SHVP). Residues 395–405 (PMEPKPDPFPQ) show a composition bias toward pro residues. Over residues 420-432 (TSDQTLAPTQPSE) the composition is skewed to polar residues. Basic and acidic residues predominate over residues 679–691 (EEARGDDKNSHVP).

Expressed in ovaries, testes and pancreas. Expressed within all stages of the adult female germline, from primordial follicles through to MII oocytes.

Its subcellular location is the nucleus. Transcription factor which may play a role in oogenesis. Binds preferentially to the DNA sequences 5'-TAATTG-3', 5'-TAGTTG-3' and 5'-TAATTA-3'. This is Homeobox protein NOBOX (NOBOX) from Homo sapiens (Human).